Reading from the N-terminus, the 425-residue chain is UPF0229 protein ETA_15540 (425 aa).

A disordered region spans residues Asn-60–Gln-111. The span at Arg-68 to Arg-90 shows a compositional bias: basic and acidic residues. Over residues Gln-92–Gly-105 the composition is skewed to gly residues.

Belongs to the UPF0229 family.

This chain is UPF0229 protein ETA_15540, found in Erwinia tasmaniensis (strain DSM 17950 / CFBP 7177 / CIP 109463 / NCPPB 4357 / Et1/99).